The primary structure comprises 86 residues: DNA-directed RNA polymerase subunit omega (86 aa).

It belongs to the RNA polymerase subunit omega family. The RNAP catalytic core consists of 2 alpha, 1 beta, 1 beta' and 1 omega subunit. When a sigma factor is associated with the core the holoenzyme is formed, which can initiate transcription.

The catalysed reaction is RNA(n) + a ribonucleoside 5'-triphosphate = RNA(n+1) + diphosphate. In terms of biological role, promotes RNA polymerase assembly. Latches the N- and C-terminal regions of the beta' subunit thereby facilitating its interaction with the beta and alpha subunits. This chain is DNA-directed RNA polymerase subunit omega, found in Psychrobacter sp. (strain PRwf-1).